A 140-amino-acid chain; its full sequence is Cell division protein SepF (140 aa).

The disordered stretch occupies residues 15–47 (DSQYEEPTEASQAAAPTESATNTRSTPKVVPMQ).

This sequence belongs to the SepF family. As to quaternary structure, homodimer. Interacts with FtsZ.

The protein resides in the cytoplasm. Its function is as follows. Cell division protein that is part of the divisome complex and is recruited early to the Z-ring. Probably stimulates Z-ring formation, perhaps through the cross-linking of FtsZ protofilaments. Its function overlaps with FtsA. The polypeptide is Cell division protein SepF (Lactiplantibacillus plantarum (strain ATCC BAA-793 / NCIMB 8826 / WCFS1) (Lactobacillus plantarum)).